A 239-amino-acid polypeptide reads, in one-letter code: tRNA (guanine-N(1)-)-methyltransferase (239 aa).

Residues Gly-108 and 127–132 each bind S-adenosyl-L-methionine; that span reads LGDFVL.

This sequence belongs to the RNA methyltransferase TrmD family. Homodimer.

It is found in the cytoplasm. It carries out the reaction guanosine(37) in tRNA + S-adenosyl-L-methionine = N(1)-methylguanosine(37) in tRNA + S-adenosyl-L-homocysteine + H(+). Functionally, specifically methylates guanosine-37 in various tRNAs. The polypeptide is tRNA (guanine-N(1)-)-methyltransferase (Streptococcus thermophilus (strain CNRZ 1066)).